A 382-amino-acid chain; its full sequence is Mannitol-1-phosphate 5-dehydrogenase (382 aa).

Residue 3–14 coordinates NAD(+); sequence ALHFGAGNIGRG.

Belongs to the mannitol dehydrogenase family.

It catalyses the reaction D-mannitol 1-phosphate + NAD(+) = beta-D-fructose 6-phosphate + NADH + H(+). This is Mannitol-1-phosphate 5-dehydrogenase from Klebsiella pneumoniae (strain 342).